The sequence spans 253 residues: Imidazole glycerol phosphate synthase subunit HisF (253 aa).

Catalysis depends on residues Asp-11 and Asp-130.

The protein belongs to the HisA/HisF family. Heterodimer of HisH and HisF.

It is found in the cytoplasm. The enzyme catalyses 5-[(5-phospho-1-deoxy-D-ribulos-1-ylimino)methylamino]-1-(5-phospho-beta-D-ribosyl)imidazole-4-carboxamide + L-glutamine = D-erythro-1-(imidazol-4-yl)glycerol 3-phosphate + 5-amino-1-(5-phospho-beta-D-ribosyl)imidazole-4-carboxamide + L-glutamate + H(+). It participates in amino-acid biosynthesis; L-histidine biosynthesis; L-histidine from 5-phospho-alpha-D-ribose 1-diphosphate: step 5/9. Its function is as follows. IGPS catalyzes the conversion of PRFAR and glutamine to IGP, AICAR and glutamate. The HisF subunit catalyzes the cyclization activity that produces IGP and AICAR from PRFAR using the ammonia provided by the HisH subunit. The sequence is that of Imidazole glycerol phosphate synthase subunit HisF from Geotalea daltonii (strain DSM 22248 / JCM 15807 / FRC-32) (Geobacter daltonii).